A 932-amino-acid chain; its full sequence is Protocadherin gamma-A8 (932 aa).

An N-terminal signal peptide occupies residues 1-29 (MAAPQSRPRRGELILLCALLGTLWEIGRG). 6 consecutive Cadherin domains span residues 30 to 133 (QIRY…NPKF), 134 to 242 (QVED…APVF), 243 to 347 (PHPI…RPEV), 348 to 452 (IITS…PPTF), 453 to 562 (PHAS…APEI), and 570 to 682 (DGST…KPSV). Residues 30-692 (QIRYSVPEET…DPNDSSLTLY (663 aa)) are Extracellular-facing. Asn47 is a glycosylation site (N-linked (GlcNAc...) asparagine). N-linked (GlcNAc...) asparagine glycosylation is found at Asn414, Asn419, and Asn545. Asn685 is a glycosylation site (N-linked (GlcNAc...) asparagine). A helical transmembrane segment spans residues 693 to 713 (LVVAVAAISCVFLAFVAVLLG). The Cytoplasmic segment spans residues 714 to 932 (LRLRRWHKSR…KKKSGKKEKK (219 aa)). Disordered regions lie at residues 804-841 (ADHG…WPNN) and 902-932 (ATLT…KEKK). Residues 810–841 (APPNTDWRFSQAQRPGTSGSQNGDDTGTWPNN) show a composition bias toward polar residues. Over residues 922 to 932 (NKKKSGKKEKK) the composition is skewed to basic residues.

It is found in the cell membrane. Its function is as follows. Potential calcium-dependent cell-adhesion protein. May be involved in the establishment and maintenance of specific neuronal connections in the brain. The protein is Protocadherin gamma-A8 (PCDHGA8) of Homo sapiens (Human).